A 1696-amino-acid chain; its full sequence is uncharacterized protein (1696 aa).

4 disordered regions span residues 1-113, 151-194, 258-284, and 299-376; these read MDSS…HPQY, DSWT…SRSR, DVTR…PEKK, and GRRE…KQRG. A compositionally biased stretch (pro residues) spans 21–42; the sequence is LHPPSAPLPPPPPLPPPPPPRQ. Polar residues predominate over residues 52–61; it reads GRSTQSNGQR. The span at 96–113 shows a compositional bias: low complexity; it reads QQQHQPLSLQQQQQHPQY. Over residues 170–183 the composition is skewed to polar residues; the sequence is RNYQYDYSRNSSGV. Composition is skewed to basic and acidic residues over residues 267–284, 325–340, and 358–376; these read EGAR…PEKK, ETPR…EWSR, and RGKE…KQRG. Position 378 is a phosphoserine (S378). Disordered stretches follow at residues 419 to 483, 688 to 724, 1063 to 1090, 1184 to 1211, 1319 to 1340, 1361 to 1429, and 1658 to 1696; these read RALL…GGKL, SDIG…LDSP, IKHK…GGTS, TSKS…VAGS, GEAV…SGVR, VVSV…SDAS, and SESR…DSGM. 2 stretches are compositionally biased toward basic and acidic residues: residues 421-436 and 695-704; these read LLSD…ERNG and DDNKRIDKNV. S708 is modified (phosphoserine). Residues 1184 to 1204 are compositionally biased toward basic and acidic residues; that stretch reads TSKSIEKIESSGGTSEHRTPE. The span at 1361-1370 shows a compositional bias: basic and acidic residues; that stretch reads VVSVPHRDPQ. Composition is skewed to polar residues over residues 1389–1398, 1658–1667, and 1677–1696; these read NYSTQKSYPS, SESRCNQSIS, and SAAN…DSGM.

This is an uncharacterized protein from Arabidopsis thaliana (Mouse-ear cress).